We begin with the raw amino-acid sequence, 77 residues long: Putative membrane protein insertion efficiency factor (77 aa).

The protein belongs to the UPF0161 family.

Its subcellular location is the cell membrane. Functionally, could be involved in insertion of integral membrane proteins into the membrane. The polypeptide is Putative membrane protein insertion efficiency factor (Geobacillus sp. (strain WCH70)).